The chain runs to 467 residues: NADH-ubiquinone oxidoreductase chain 4 (467 aa).

13 helical membrane passes run 21–40, 54–74, 79–99, 105–125, 135–155, 168–188, 207–227, 239–259, 266–286, 297–317, 330–350, 367–387, and 420–440; these read SMSK…PTLY, MADV…ISNW, STLY…NFMC, FYMY…LYGA, VLMY…LYEV, LVLS…GIAV, PLAG…FAMI, VTYT…TSII, LKVI…LGML, LVLC…VGGM, FQGL…LSFC, LTGA…SVLL, and VLMI…SWVM.

The protein belongs to the complex I subunit 4 family.

Its subcellular location is the mitochondrion membrane. The enzyme catalyses a ubiquinone + NADH + 5 H(+)(in) = a ubiquinol + NAD(+) + 4 H(+)(out). Its function is as follows. Core subunit of the mitochondrial membrane respiratory chain NADH dehydrogenase (Complex I) that is believed to belong to the minimal assembly required for catalysis. Complex I functions in the transfer of electrons from NADH to the respiratory chain. The immediate electron acceptor for the enzyme is believed to be ubiquinone. The protein is NADH-ubiquinone oxidoreductase chain 4 (ND4) of Debaryomyces hansenii (strain ATCC 36239 / CBS 767 / BCRC 21394 / JCM 1990 / NBRC 0083 / IGC 2968) (Yeast).